A 509-amino-acid chain; its full sequence is Photosystem II CP47 reaction center protein (509 aa).

Transmembrane regions (helical) follow at residues S21–S36, I101–W115, G140–F156, I203–T218, V237–V252, and V457–R472.

This sequence belongs to the PsbB/PsbC family. PsbB subfamily. As to quaternary structure, PSII is composed of 1 copy each of membrane proteins PsbA, PsbB, PsbC, PsbD, PsbE, PsbF, PsbH, PsbI, PsbJ, PsbK, PsbL, PsbM, PsbT, PsbX, PsbY, PsbZ, Psb30/Ycf12, peripheral proteins PsbO, CyanoQ (PsbQ), PsbU, PsbV and a large number of cofactors. It forms dimeric complexes. Requires Binds multiple chlorophylls. PSII binds additional chlorophylls, carotenoids and specific lipids. as cofactor.

Its subcellular location is the cellular thylakoid membrane. Functionally, one of the components of the core complex of photosystem II (PSII). It binds chlorophyll and helps catalyze the primary light-induced photochemical processes of PSII. PSII is a light-driven water:plastoquinone oxidoreductase, using light energy to abstract electrons from H(2)O, generating O(2) and a proton gradient subsequently used for ATP formation. The protein is Photosystem II CP47 reaction center protein of Nostoc sp. (strain PCC 7120 / SAG 25.82 / UTEX 2576).